Reading from the N-terminus, the 627-residue chain is (R)-linalool synthase, chloroplastic (627 aa).

A chloroplast-targeting transit peptide spans 1–21; the sequence is MAFVSIAPLASRCCVHKSFVS. Mg(2+)-binding residues include Asp378, Asp382, and Glu530. A DDXXD motif motif is present at residues 378-382; it reads DDIYD.

Belongs to the terpene synthase family. Tpsd subfamily. It depends on Mg(2+) as a cofactor. The cofactor is Mn(2+).

The protein resides in the plastid. It is found in the chloroplast. The catalysed reaction is (2E)-geranyl diphosphate + H2O = (R)-linalool + diphosphate. It functions in the pathway terpene metabolism; oleoresin biosynthesis. Functionally, terpene synthase (TPS) involved in the biosynthesis of monoterpene natural products included in conifer oleoresin secretions and volatile emissions; these compounds contribute to biotic and abiotic stress defense against herbivores and pathogens. Catalyzes the conversion of (2E)-geranyl diphosphate (GPP) to (R)-linalool. In Picea glauca (White spruce), this protein is (R)-linalool synthase, chloroplastic.